The following is a 97-amino-acid chain: MANCIRRNALFFLTLLFLLSVSNLVQAARGGGKLKPQQCNSKCSFRCSATSHKKPCMFFCLKCCKKCLCVPPGTFGNKQTCPCYNNWKTKEGRPKCP.

A signal peptide spans 1–27 (MANCIRRNALFFLTLLFLLSVSNLVQA).

It belongs to the GASA family. Six disulfide bonds may be present. Expressed in roots, root hairs, vasculature of cotyledons and hypocotyls, shoot apex, leaf veins, stems, flower receptacles, pollen, filaments, anthers and siliques.

It is found in the secreted. Its subcellular location is the cell wall. It localises to the extracellular space. The protein resides in the extracellular matrix. Gibberellin-regulated protein that acts as a negative regulator of gibberellin-induced flowering and stem growth. May inhibit flowering and inflorescence growth via a pathway involving GAI and by enhancing FLC expression and repressing FT and LFY. Acts as a negative regulator in thermotolerance by resogulating both salicylic acid (SA) signaling and heat shock-protein accumulation. The protein is Gibberellin-regulated protein 5 (GASA5) of Arabidopsis thaliana (Mouse-ear cress).